Reading from the N-terminus, the 504-residue chain is Arabinose import ATP-binding protein AraG (504 aa).

ABC transporter domains follow at residues 8–243 (LSFR…MVGR) and 256–499 (YGEE…MPKV). Residue 40–47 (GENGAGKS) participates in ATP binding.

The protein belongs to the ABC transporter superfamily. Arabinose importer (TC 3.A.1.2.2) family. In terms of assembly, the complex is composed of two ATP-binding proteins (AraG), two transmembrane proteins (AraH) and a solute-binding protein (AraF).

It localises to the cell inner membrane. The catalysed reaction is L-arabinose(out) + ATP + H2O = L-arabinose(in) + ADP + phosphate + H(+). Functionally, part of the ABC transporter complex AraFGH involved in arabinose import. Responsible for energy coupling to the transport system. The sequence is that of Arabinose import ATP-binding protein AraG from Shigella sonnei (strain Ss046).